The following is a 297-amino-acid chain: Protoheme IX farnesyltransferase 1 (297 aa).

9 consecutive transmembrane segments (helical) span residues 23–43 (VVVLMLITSLAGMFLATRAGV), 45–65 (WSVLLFGNLGIGLCAGGAAVV), 93–113 (LPALLFALALALLGMVLLLVF), 117–137 (LTAWLTLASLLGYAVLYTGFL), 145–165 (IVIGGLAGAAPPLLGWVAVSG), 171–191 (PLLLVLIIFAWTPPHFWALAI), 216–236 (LHILLYTLILLAVSLLPYAIH), 241–261 (LYLACALGLGLRFLHWAWVLY), and 277–297 (IGYLFALFIALLLDHYLLLSL).

Belongs to the UbiA prenyltransferase family. Protoheme IX farnesyltransferase subfamily.

The protein resides in the cell inner membrane. The catalysed reaction is heme b + (2E,6E)-farnesyl diphosphate + H2O = Fe(II)-heme o + diphosphate. The protein operates within porphyrin-containing compound metabolism; heme O biosynthesis; heme O from protoheme: step 1/1. Functionally, converts heme B (protoheme IX) to heme O by substitution of the vinyl group on carbon 2 of heme B porphyrin ring with a hydroxyethyl farnesyl side group. The sequence is that of Protoheme IX farnesyltransferase 1 from Pseudomonas putida (strain ATCC 700007 / DSM 6899 / JCM 31910 / BCRC 17059 / LMG 24140 / F1).